The sequence spans 1396 residues: MSGDSIHRRRMALHCPITSLILLLIAMSAHGYNIDLPSYVRFRQSSNSMFGFSIAMHKGRSGFYGNQNNVSLIVGAPKFDTSRYQQGVTEAGGVFKCSLNDDDCKLVPFDSKGNNRNVDKEVVDRKSYQWLGATVATGRDSDLVVACAPRYVFHTMTPSRAFRIDPVGTCFTSHNFEEFYEVSPCRTNNWGYHRQGSCQAGFSAAINGNGSRLFIGAPGSWYWQGQTYSIPPDAKFPFKPPLYQPFGTGGMASSHDVTRPENQVFSTSESASVNDDSYLGYSMVTGDFDGDRSEDVAIGMPRGGNLVGRIVVNRWNMANIFNITGRQIGEYFGYSLATSDVDGDGLDDLLIGAPMYTDPDNVEGKYDVGRVYILLQGGPTEEKRWTTEHIRDGYHSKGRFGLALTTLGDVNGDGYGDFAVGAPYDGPEGRGVVYIFHGSPMGPLAKPSQIIKSEQLVEGAPYPRTFGFALSGGLDMDGNTYPDLAVGAYSSDQVFIFKSRPVAAVNAETSFASNSKLISLDDRSCQLVRDHKKVPCMLLTTCWSYTGRYLPEQLDFDVSWLLDAKKLLNPRMFFLRDEGKNIRNQTIRLNYGQKYCLNETVYLLDKVQDKLTPLEVEARYNLRSSRPLDPMVRHRRSILEPVIDQNREIVLRDAINIQKNCGPDNICEPDLKLKVSTVDKYLFGSPEPLVIEVFISNTNEDAFEAAFYMVTPPDLQFRKLQQLGEKKDTPITCSPPTPENNHTLKCDIGNPLESGKIAHFKISLVPEEKYGSSSSYDFYWEANSTNLEKPGSEYDNKIRQSVGIWVDTDLDIKGTSLPDYQLYKADDYKELENATKEDDIGPQVVHIYEIRNNRPSIIEEAEVFIHLPYETIVGDPLMYLLNQPETGGKIQCDDVAFNEYNLLLDEKLVKKSYLQAQGAIWNSAQVSGQSSSSSSSGGASVHIEKARGEGFVRGVLVSNSTDAGDKLSPKQVEQRRQEDTLEALGDASFVHRDRASQAVQEPQVNQTSFTTYSTSSSSSGSGAPSAQLRGHSTQGHIQMAGPVQHTSSSSSSNYRSWPAQQQQQHQQLLLAGSGGSGLGSPVTFNDKSQFGGRNNNFHTGTLDLGTLNRGNVDNELYRSQGQYQNPSQSLGQSQGQFQANANQGHYQGQNQAQFQARNPGFQGQTSYQGQTQYSGQPGGYQTHHVTYSSGSKPYYGRENEDFYDEDNLQQATPGHWSSSSSSSSSSGTRRLRRSNDKDGATEKPLQIDLNSPCQSARCKSIRCVVTNLGTEDGDAAFVAIRARMVAKTMEKLASNVPLNVSTLAVANVTLLPFIGAPKDAIVKTHEIFYKAEPEPLQVPDVVPLWVVVLAACAGALIFLLLVWLLYKCGFFNRNRPTDHSQERQPLRNGYHGDEHL.

The N-terminal stretch at 1–31 (MSGDSIHRRRMALHCPITSLILLLIAMSAHG) is a signal peptide. Topologically, residues 32 to 1341 (YNIDLPSYVR…EPEPLQVPDV (1310 aa)) are extracellular. 7 FG-GAP repeats span residues 36 to 106 (LPSY…DCKL), 117 to 174 (NVDK…FTSH), 186 to 239 (RTNN…FPFK), 266 to 317 (STSE…RWNM), 318 to 383 (ANIF…TEEK), 386 to 445 (TTEH…GPLA), and 452 to 514 (KSEQ…FASN). N69 carries N-linked (GlcNAc...) asparagine glycosylation. The N-linked (GlcNAc...) asparagine glycan is linked to N209. N322 carries an N-linked (GlcNAc...) asparagine glycan. Residues N584, N598, N741, N783, N833, and N959 are each glycosylated (N-linked (GlcNAc...) asparagine). 2 disordered regions span residues 960–1107 (STDA…LGTL) and 1159–1246 (PGFQ…KPLQ). A compositionally biased stretch (basic and acidic residues) spans 963–979 (AGDKLSPKQVEQRRQED). Residues 997–1006 (QAVQEPQVNQ) show a composition bias toward polar residues. Residue N1005 is glycosylated (N-linked (GlcNAc...) asparagine). Composition is skewed to low complexity over residues 1007-1021 (TSFTTYSTSSSSSGS) and 1060-1071 (QQQQQHQQLLLA). Residues 1082–1099 (VTFNDKSQFGGRNNNFHT) show a composition bias toward polar residues. Composition is skewed to low complexity over residues 1162-1182 (QGQTSYQGQTQYSGQPGGYQT) and 1217-1226 (SSSSSSSSSS). N1299 and N1307 each carry an N-linked (GlcNAc...) asparagine glycan. The chain crosses the membrane as a helical span at residues 1342 to 1366 (VPLWVVVLAACAGALIFLLLVWLLY). The Cytoplasmic segment spans residues 1367 to 1396 (KCGFFNRNRPTDHSQERQPLRNGYHGDEHL). The interval 1377–1396 (TDHSQERQPLRNGYHGDEHL) is disordered.

Belongs to the integrin alpha chain family. As to quaternary structure, heterodimer of an alpha and a beta subunit. The alpha subunit is composed of a heavy and a light chain linked by a disulfide bond. Alpha-PS2 associates with beta-PS. In terms of processing, the heavy-light chain cleavage site is either in 1230-1231, or 1233-1234, or 1243-1244. As to expression, in ovaries, highly expressed in follicle cells. At syncytial blastoderm stage, expressed in the embryonic mesodermal precursors but not in the ectoderm. At embryonic stages 7 and 10, expression is restricted to the mesoderm. At stage 12, expressed in the gonadal sheath and the interstitial cells of the gonad. In stage 16 embryos, expressed in the somatic and visceral muscles where localizes to sites of attachment between adjacent muscles. In third larval instar wing imaginal disk, expressed in the ventral compartment and in a subset of adepithelial and peripodial cells (at protein level).

It is found in the apical cell membrane. The protein localises to the lateral cell membrane. It localises to the basal cell membrane. Its function is as follows. Alpha-PS2/beta-PS is a receptor for Tig, wb and Ten-m. Involved in the function and/or development of the olfactory system. The sequence is that of Integrin alpha-PS2 (if) from Drosophila melanogaster (Fruit fly).